The chain runs to 353 residues: MDIFKELIVKHPDENVLISPVSILSTLSILNHGAAGSTAEQLSKYIENMNENTPDDNNDMDVDIPYCATLATANKIYGSDSIEFHASFLQKIKDDFQTVNFNNANQTKELINEWVKTMTNGKINSLLTSPLSINTRMTVVSAVHFKAMWKYPFSKHLTYTDKFYISKNIVTSVDMMVGTENNLQYVHINELFGGFSIIDIPYEGNSSMVIILPDDIEGIYNIEKNITDEKFKKWCGMLSTKSIDLYMPKFKVEMTEPYNLVPILENLGLTNIFGYYADFSKMCNETITVEKFLHTTFIDVNEEYTEASAVTGVFTINFSMVYRTKVYINHPFMYMIKDTTGRILFIGKYCYPQ.

Belongs to the serpin family. Poxviruses subfamily.

The protein localises to the host cytoplasm. Plays a role in mediating viral host range. May act to inhibit a caspase independent form of apoptosis to allow efficient virus replication in infected cells. The protein is Serine proteinase inhibitor 1 (OPG208) of Vaccinia virus (strain Copenhagen) (VACV).